A 363-amino-acid chain; its full sequence is 3-isopropylmalate dehydrogenase (363 aa).

78–91 (GKRWDHLPINERPE) is a binding site for NAD(+). Residues Arg99, Arg109, Arg138, and Asp227 each contribute to the substrate site. Mg(2+)-binding residues include Asp227, Asp251, and Asp255. NAD(+) is bound at residue 285-297 (GSAPDIAGKNTAN).

It belongs to the isocitrate and isopropylmalate dehydrogenases family. LeuB type 1 subfamily. As to quaternary structure, homodimer. Mg(2+) is required as a cofactor. The cofactor is Mn(2+).

Its subcellular location is the cytoplasm. The enzyme catalyses (2R,3S)-3-isopropylmalate + NAD(+) = 4-methyl-2-oxopentanoate + CO2 + NADH. Its pathway is amino-acid biosynthesis; L-leucine biosynthesis; L-leucine from 3-methyl-2-oxobutanoate: step 3/4. In terms of biological role, catalyzes the oxidation of 3-carboxy-2-hydroxy-4-methylpentanoate (3-isopropylmalate) to 3-carboxy-4-methyl-2-oxopentanoate. The product decarboxylates to 4-methyl-2 oxopentanoate. In Buchnera aphidicola subsp. Uroleucon helianthicola, this protein is 3-isopropylmalate dehydrogenase.